The sequence spans 115 residues: Large ribosomal subunit protein bL19 (115 aa).

It belongs to the bacterial ribosomal protein bL19 family.

In terms of biological role, this protein is located at the 30S-50S ribosomal subunit interface and may play a role in the structure and function of the aminoacyl-tRNA binding site. This Clostridium tetani (strain Massachusetts / E88) protein is Large ribosomal subunit protein bL19.